The following is a 589-amino-acid chain: Cell fusion protein aff-1 (589 aa).

An N-terminal signal peptide occupies residues 1 to 20; sequence MRLWQWSIAVAICLVMVTEA. Topologically, residues 21–537 are extracellular; it reads RLRRHHRKRR…MAHGGDFTEW (517 aa). N-linked (GlcNAc...) asparagine glycosylation is found at asparagine 58, asparagine 138, asparagine 205, asparagine 335, asparagine 382, asparagine 392, and asparagine 408. A helical membrane pass occupies residues 538–558; sequence LKIGIHIVIAVGLLLLLILLF. Topologically, residues 559–589 are cytoplasmic; it reads TKCLVPLACCSLSIPFKNRNKKKKKKNSSDY.

Belongs to the EFF/AFF cell fusogen family. Expressed in amphid sheath cells.

The protein localises to the cell membrane. The protein resides in the apical cell membrane. In terms of biological role, required for cell fusion events during development including the fusion of anchor cells (AC), vulval A and vulval D rings, and late epidermal seam cells. Required for amphid sheath cell fusion induced by entry into dauer stage. The chain is Cell fusion protein aff-1 from Caenorhabditis elegans.